Here is a 1280-residue protein sequence, read N- to C-terminus: Dynactin subunit 1 (1280 aa).

A disordered region spans residues 1–26 (MAQSKRHMYNRTPSGSRMSTEASARP). Polar residues predominate over residues 11–22 (RTPSGSRMSTEA). Positions 48–90 (GATLFATGKWVGVILDEAKGKNDGTVQGRKYFTCDEGHGIFVR) constitute a CAP-Gly domain. The interval 99 to 223 (DGADTTSPET…SKEEEGLRDQ (125 aa)) is disordered. The span at 102–114 (DTTSPETPDSSAS) shows a compositional bias: polar residues. Phosphothreonine is present on residues Thr-108, Thr-145, Thr-146, and Thr-147. Residues 129 to 152 (SKLRGLKPKKAPTARKTTTRRPKP) show a composition bias toward basic residues. Positions 161 to 205 (AGPSSSLGPSGSASAGELSSSEPSTPAQTPLAAPIIPTPALTSPG) are enriched in low complexity. Position 179 is a phosphoserine; by PLK1 (Ser-179). Ser-212 carries the phosphoserine; by CDK1 modification. Residues 214-223 (SKEEEGLRDQ) show a composition bias toward basic and acidic residues. 2 coiled-coil regions span residues 214-513 (SKEE…ADYQ) and 942-1048 (LKLE…EGLR). The interaction with HPS6 stretch occupies residues 910–1280 (EYDAERPPSK…LHQLHGRLIS (371 aa)). The tract at residues 1064 to 1089 (GEEQQRGGTPGQAPGALPGPGPVKDS) is disordered. A coiled-coil region spans residues 1184 to 1213 (SAQLMEQVAQLKSLSDTIEKLKDEVLKETV).

It belongs to the dynactin 150 kDa subunit family. Monomer and homodimer. Subunit of dynactin, a multiprotein complex part of a tripartite complex with dynein and a adapter, such as BICDL1, BICD2 or HOOK3. The dynactin complex is built around ACTR1A/ACTB filament and consists of an actin-related filament composed of a shoulder domain, a pointed end and a barbed end. Its length is defined by its flexible shoulder domain. The soulder is composed of 2 DCTN1 subunits, 4 DCTN2 and 2 DCTN3. DCTN1/p150(glued) binds directly to microtubules and to cytoplasmic dynein. The 4 DCNT2 (via N-terminus) bind the ACTR1A filament and act as molecular rulers to determine the length. The pointed end is important for binding dynein-dynactin cargo adapters. Consists of 4 subunits: ACTR10, DCNT4, DCTN5 and DCTN6. The barbed end is composed of a CAPZA1:CAPZB heterodimers, which binds ACTR1A/ACTB filament and dynactin and stabilizes dynactin. Interacts with the C-terminus of MAPRE1, MAPRE2 and MAPRE3. Interacts (via C-terminus) with SNX6. Interacts with CLN3, DYNAP, ECPAS and FBXL5. Interacts with MISP; this interaction regulates its distribution at the cell cortex. Interacts with CEP131. Interacts with CEP126. Interacts with CLIP1. Interacts with dynein intermediate chain and dynein heavy chain. Interacts with PLK1 (via POLO-box domain). Interacts with TBCB. Binds preferentially to tyrosinated microtubules than to detyrosinated microtubules. Interacts with PARD6A. Interacts with HPS6. Interacts with KIF3A. Interacts with BICD2. Interacts with DST (isoform 9). Interacts with DST (isoform 1). Identified in a complex with MREG and RILP. Interacts with BCCIP (isoform 2/alpha). Interacts with DCDC1. Interacts with AKNA. Interacts with DYNC1I2. Interacts with RUFY3 and RUFY4. Ubiquitinated by a SCF complex containing FBXL5, leading to its degradation by the proteasome. In terms of processing, phosphorylation by SLK at Thr-145, Thr-146 and Thr-147 targets DCTN1 to the centrosome. It is uncertain if SLK phosphorylates all three threonines or one or two of them. PLK1-mediated phosphorylation at Ser-179 is essential for its localization in the nuclear envelope and promotes its dissociation from microtubules during early mitosis and positively regulates nuclear envelope breakdown during prophase. As to expression, ubiquitous with a high level expression observed in the brain (at protein level).

It is found in the cytoplasm. It localises to the cytoskeleton. The protein localises to the microtubule organizing center. The protein resides in the centrosome. Its subcellular location is the centriole. It is found in the spindle. It localises to the nucleus envelope. The protein localises to the cell cortex. Part of the dynactin complex that activates the molecular motor dynein for ultra-processive transport along microtubules. Plays a key role in dynein-mediated retrograde transport of vesicles and organelles along microtubules by recruiting and tethering dynein to microtubules. Binds to both dynein and microtubules providing a link between specific cargos, microtubules and dynein. Essential for targeting dynein to microtubule plus ends, recruiting dynein to membranous cargos and enhancing dynein processivity (the ability to move along a microtubule for a long distance without falling off the track). Can also act as a brake to slow the dynein motor during motility along the microtubule. Can regulate microtubule stability by promoting microtubule formation, nucleation and polymerization and by inhibiting microtubule catastrophe in neurons. Inhibits microtubule catastrophe by binding both to microtubules and to tubulin, leading to enhanced microtubule stability along the axon. Plays a role in metaphase spindle orientation. Plays a role in centriole cohesion and subdistal appendage organization and function. Its recruitment to the centriole in a KIF3A-dependent manner is essential for the maintenance of centriole cohesion and the formation of subdistal appendage. Also required for microtubule anchoring at the mother centriole. Plays a role in primary cilia formation. This Rattus norvegicus (Rat) protein is Dynactin subunit 1 (Dctn1).